The sequence spans 27 residues: MGKGDRRTRRGKIWRGTYGKYRPRKKK.

A compositionally biased stretch (basic residues) spans 1 to 13; that stretch reads MGKGDRRTRRGKI. The tract at residues 1-27 is disordered; that stretch reads MGKGDRRTRRGKIWRGTYGKYRPRKKK.

Belongs to the bacterial ribosomal protein bTHX family. As to quaternary structure, part of the 30S ribosomal subunit.

Functionally, binds at the top of the head of the 30S subunit. It stabilizes a number of different RNA elements and thus is important for subunit structure. The polypeptide is Small ribosomal subunit protein bTHX (rpsU) (Thermus aquaticus).